Here is a 180-residue protein sequence, read N- to C-terminus: uncharacterized protein (180 aa).

The N-terminal stretch at 1-21 (MKQCIAFMAILALSLSAISEA) is a signal peptide. The tract at residues 23–81 (GGRGVRSSGYSRPVATKPAPAPKQTQTQQQSQQPDATFGQQNMQNTATNTPNNPNNRLA) is disordered. Residues 27–78 (VRSSGYSRPVATKPAPAPKQTQTQQQSQQPDATFGQQNMQNTATNTPNNPNN) show a composition bias toward low complexity.

This is an uncharacterized protein from Pasteurella multocida (strain Pm70).